Reading from the N-terminus, the 144-residue chain is Large ribosomal subunit protein uL11 (144 aa).

It belongs to the universal ribosomal protein uL11 family. In terms of assembly, part of the ribosomal stalk of the 50S ribosomal subunit. Interacts with L10 and the large rRNA to form the base of the stalk. L10 forms an elongated spine to which L12 dimers bind in a sequential fashion forming a multimeric L10(L12)X complex. One or more lysine residues are methylated.

Functionally, forms part of the ribosomal stalk which helps the ribosome interact with GTP-bound translation factors. This is Large ribosomal subunit protein uL11 from Francisella tularensis subsp. mediasiatica (strain FSC147).